The primary structure comprises 456 residues: MQQTVTYGAKWKQFLTIFTPIVITQLTLFSMTFFDTTMSGNYSNQALAGVAIGSSFWAPVNAAFSGLLMAITPIIAQLIGAKKEKQVKNTVHNGLYIALFLAFILILINFLVVPTILTHMPVTAEVAHIARHFLNGICIGIPAFFISAILRSFIDSLGLTRVTMLITLCTVPFNIFLNYCFIFGNFGFPEMGGAGSGYATGITYWLVVLVSVILIQTQTRLRKFGIFKGLTALRFSKVKEIIGIGVPNGLTILFETSIFSAVTILMGAFGTETIAAHQSANSVCTLLYAFPLSVASTLTILGGYETGAKRLKDAKQYRHIGMTAAILIGCINGAILFFFRDIIAGFYTNDAELSDLIMHFLVYAILFQFADAVLSPVLGALRGYKDVAITSIIAFISYWLIGLPVGYGLSFTNLGPFGYWIGLSTGLFVAAFILSIRVRKTERKLSLNAKNAEISS.

Helical transmembrane passes span Q13–F34, S54–A76, L95–L117, H132–I154, R161–F183, G193–I215, I244–M266, L286–A308, G321–I343, M358–A380, V387–L409, and L414–I436.

This sequence belongs to the multi antimicrobial extrusion (MATE) (TC 2.A.66.1) family.

It localises to the cell membrane. Multidrug efflux pump. In Listeria innocua serovar 6a (strain ATCC BAA-680 / CLIP 11262), this protein is Probable multidrug resistance protein NorM (norM).